The following is a 295-amino-acid chain: Ethanolamine ammonia-lyase small subunit (295 aa).

Positions 207, 228, and 258 each coordinate adenosylcob(III)alamin.

Belongs to the EutC family. In terms of assembly, the basic unit is a heterodimer which dimerizes to form tetramers. The heterotetramers trimerize; 6 large subunits form a core ring with 6 small subunits projecting outwards. Adenosylcob(III)alamin is required as a cofactor.

The protein resides in the bacterial microcompartment. The catalysed reaction is ethanolamine = acetaldehyde + NH4(+). It participates in amine and polyamine degradation; ethanolamine degradation. Functionally, catalyzes the deamination of various vicinal amino-alcohols to oxo compounds. Allows this organism to utilize ethanolamine as the sole source of nitrogen and carbon in the presence of external vitamin B12. The sequence is that of Ethanolamine ammonia-lyase small subunit from Shigella sonnei (strain Ss046).